Reading from the N-terminus, the 230-residue chain is Leucyl/phenylalanyl-tRNA--protein transferase (230 aa).

It belongs to the L/F-transferase family.

The protein resides in the cytoplasm. The catalysed reaction is N-terminal L-lysyl-[protein] + L-leucyl-tRNA(Leu) = N-terminal L-leucyl-L-lysyl-[protein] + tRNA(Leu) + H(+). It carries out the reaction N-terminal L-arginyl-[protein] + L-leucyl-tRNA(Leu) = N-terminal L-leucyl-L-arginyl-[protein] + tRNA(Leu) + H(+). The enzyme catalyses L-phenylalanyl-tRNA(Phe) + an N-terminal L-alpha-aminoacyl-[protein] = an N-terminal L-phenylalanyl-L-alpha-aminoacyl-[protein] + tRNA(Phe). Functionally, functions in the N-end rule pathway of protein degradation where it conjugates Leu, Phe and, less efficiently, Met from aminoacyl-tRNAs to the N-termini of proteins containing an N-terminal arginine or lysine. This is Leucyl/phenylalanyl-tRNA--protein transferase from Erwinia tasmaniensis (strain DSM 17950 / CFBP 7177 / CIP 109463 / NCPPB 4357 / Et1/99).